A 281-amino-acid polypeptide reads, in one-letter code: Bifunctional protein FolD (281 aa).

Residues 165 to 167, Thr192, and Val233 contribute to the NADP(+) site; that span reads GRG.

This sequence belongs to the tetrahydrofolate dehydrogenase/cyclohydrolase family. As to quaternary structure, homodimer.

The enzyme catalyses (6R)-5,10-methylene-5,6,7,8-tetrahydrofolate + NADP(+) = (6R)-5,10-methenyltetrahydrofolate + NADPH. The catalysed reaction is (6R)-5,10-methenyltetrahydrofolate + H2O = (6R)-10-formyltetrahydrofolate + H(+). The protein operates within one-carbon metabolism; tetrahydrofolate interconversion. Its function is as follows. Catalyzes the oxidation of 5,10-methylenetetrahydrofolate to 5,10-methenyltetrahydrofolate and then the hydrolysis of 5,10-methenyltetrahydrofolate to 10-formyltetrahydrofolate. This Mycolicibacterium paratuberculosis (strain ATCC BAA-968 / K-10) (Mycobacterium paratuberculosis) protein is Bifunctional protein FolD.